The sequence spans 1649 residues: DNA-directed RNA polymerase subunit beta' (1649 aa).

Cysteine 63, cysteine 65, cysteine 78, and cysteine 81 together coordinate Zn(2+). Positions 747, 749, and 751 each coordinate Mg(2+). The Zn(2+) site is built by cysteine 1078, cysteine 1269, cysteine 1276, and cysteine 1279.

This sequence belongs to the RNA polymerase beta' chain family. The RNAP catalytic core consists of 2 alpha, 1 beta, 1 beta' and 1 omega subunit. When a sigma factor is associated with the core the holoenzyme is formed, which can initiate transcription. The cofactor is Mg(2+). Zn(2+) serves as cofactor.

The enzyme catalyses RNA(n) + a ribonucleoside 5'-triphosphate = RNA(n+1) + diphosphate. In terms of biological role, DNA-dependent RNA polymerase catalyzes the transcription of DNA into RNA using the four ribonucleoside triphosphates as substrates. The chain is DNA-directed RNA polymerase subunit beta' from Thermosipho melanesiensis (strain DSM 12029 / CIP 104789 / BI429).